The primary structure comprises 752 residues: Kaurene synthase like 2, chloroplastic (752 aa).

A chloroplast-targeting transit peptide spans 1–28 (MSLLLSNSALVGPKFRSSRISHASASLD). The Mg(2+) site is built by aspartate 538, aspartate 542, asparagine 682, and glutamate 690. Positions 538-542 (DDLFD) match the DDXXD motif motif.

Belongs to the terpene synthase family. Requires Mg(2+) as cofactor. In terms of tissue distribution, highly expressed in leaves.

The protein localises to the plastid. Its subcellular location is the chloroplast. The protein operates within secondary metabolite biosynthesis; terpenoid biosynthesis. In terms of biological role, involved in the biosynthesis of ent-kaurene diterpenoids natural products such as oridonin, miltiradiene, eriocalyxin B and nezukol, known to exhibit antitumor, anti-inflammatory and antibacterial activities. Catalyzes the conversion of ent-copalyl diphosphate (ent-CPP) to ent-isopimaradiene like compounds. The chain is Kaurene synthase like 2, chloroplastic from Isodon rubescens (Rabdosia rubescens).